Consider the following 561-residue polypeptide: Inner membrane ABC transporter ATP-binding protein YddA (561 aa).

The Cytoplasmic segment spans residues 1–3 (MIT). The chain crosses the membrane as a helical span at residues 4-24 (IPITLRMLIAKYLCLLKPFWL). Topologically, residues 25-31 (RKNNKTS) are periplasmic. A helical transmembrane segment spans residues 32-52 (VLLIIIILAMILGVVKIQVWL). One can recognise an ABC transmembrane type-1 domain in the interval 35–337 (IIIILAMILG…FIYKYDELAE (303 aa)). The Cytoplasmic portion of the chain corresponds to 53–70 (NDWNNDFFNALSQKETDK). The chain crosses the membrane as a helical span at residues 71-91 (LWQLVLWFPALLGIFVLISVN). Over 92–151 (KTWLIKLLTIRWREWLTDYYLNRWFADKNYYFTQIYGEHKNTDNPDQRIAEDILLLISKT) the chain is Periplasmic. The chain crosses the membrane as a helical span at residues 152–172 (LSLSFGFIQSLSMLITFTVIL). Over 173–187 (WESAGTLSFTVGGTE) the chain is Cytoplasmic. The helical transmembrane segment at 188–208 (WNIQGYMVYTVVLIVIGGTLF) threads the bilayer. The Periplasmic segment spans residues 209 to 290 (THKVGKRIRP…WQNIYSRSLS (82 aa)). The chain crosses the membrane as a helical span at residues 291–311 (VLPYFLLLPQFISGQINLGGL). Residues 312–561 (MKSRQAFMLV…DDICDISAVL (250 aa)) are Cytoplasmic-facing. The region spanning 367-561 (VQVADASIRT…DDICDISAVL (195 aa)) is the ABC transporter domain. 400-407 (GYSGAGKT) contacts ATP.

This sequence belongs to the ABC transporter superfamily.

Its subcellular location is the cell inner membrane. This chain is Inner membrane ABC transporter ATP-binding protein YddA (yddA), found in Escherichia coli (strain K12).